The sequence spans 1276 residues: Probable histone acetyltransferase HAC-like 3 (1276 aa).

A disordered region spans residues 391–421 (VDRAEQTSNSTVSKPTSPASDGSSGKHYPAK). Residues 396–413 (QTSNSTVSKPTSPASDGS) are compositionally biased toward polar residues. Residues 621–689 (SSICGRCHHL…EYTCAKCFLK (69 aa)) form a PHD-type zinc finger. Positions 704–1130 (ILGARELPRT…ILYHLHDSTC (427 aa)) constitute a CBP/p300-type HAT domain. Acetyl-CoA is bound by residues 827-829 (IDS), 846-847 (RT), and Trp-902. Residues 953-973 (EAERLLEKKDDDTSQKKETQL) are a coiled coil. ZZ-type zinc fingers lie at residues 1013-1076 (CLQQ…EEPL) and 1125-1187 (LHDS…LQDY). Zn(2+) is bound by residues Cys-1018, Cys-1021, Cys-1033, Cys-1036, Cys-1042, Cys-1045, His-1058, His-1066, Cys-1130, Cys-1133, Cys-1145, Cys-1148, Cys-1154, Cys-1157, His-1168, and His-1177. The TAZ-type zinc finger occupies 1177–1260 (HVLQKYTLQD…DCSAPRCRDI (84 aa)).

Its subcellular location is the nucleus. It catalyses the reaction L-lysyl-[protein] + acetyl-CoA = N(6)-acetyl-L-lysyl-[protein] + CoA + H(+). Functionally, acetyltransferase enzyme. Acetylates histones, giving a specific tag for transcriptional activation. This Oryza sativa subsp. japonica (Rice) protein is Probable histone acetyltransferase HAC-like 3.